A 76-amino-acid chain; its full sequence is Short coiled-coil protein B (76 aa).

Positions 6 to 52 (ENQVELEEKTRLINQVLELQNTLEDLSARVDAVKEENLKLKSENQVL) form a coiled coil.

It belongs to the SCOC family.

Its subcellular location is the golgi apparatus membrane. It localises to the golgi apparatus. The protein localises to the trans-Golgi network. The protein resides in the cytoplasm. It is found in the cytosol. Its function is as follows. Positive regulator of amino acid starvation-induced autophagy. This Danio rerio (Zebrafish) protein is Short coiled-coil protein B (scocb).